The chain runs to 177 residues: Large ribosomal subunit protein uL6 (177 aa).

This sequence belongs to the universal ribosomal protein uL6 family. Part of the 50S ribosomal subunit.

This protein binds to the 23S rRNA, and is important in its secondary structure. It is located near the subunit interface in the base of the L7/L12 stalk, and near the tRNA binding site of the peptidyltransferase center. The polypeptide is Large ribosomal subunit protein uL6 (Rhizobium leguminosarum bv. trifolii (strain WSM2304)).